A 441-amino-acid chain; its full sequence is Glutamyl-tRNA reductase (441 aa).

Substrate contacts are provided by residues 58–61, S116, 121–123, and Q127; these read TCNR and EPD. C59 acts as the Nucleophile in catalysis. NADP(+) is bound at residue 195–200; sequence GAGMAG.

This sequence belongs to the glutamyl-tRNA reductase family. In terms of assembly, homodimer.

The catalysed reaction is (S)-4-amino-5-oxopentanoate + tRNA(Glu) + NADP(+) = L-glutamyl-tRNA(Glu) + NADPH + H(+). It functions in the pathway porphyrin-containing compound metabolism; protoporphyrin-IX biosynthesis; 5-aminolevulinate from L-glutamyl-tRNA(Glu): step 1/2. Its function is as follows. Catalyzes the NADPH-dependent reduction of glutamyl-tRNA(Glu) to glutamate 1-semialdehyde (GSA). This chain is Glutamyl-tRNA reductase, found in Ignicoccus hospitalis (strain KIN4/I / DSM 18386 / JCM 14125).